Reading from the N-terminus, the 804-residue chain is MAPPLFLLSLQLLVLLSSPSAQAQNISLGTSLTTQGPNNAWLSPSGDFAFGFRPIDGNSSFYLLAIWFNKISDKTATWYAKTSEQEPQPIQVPSGSILQFTSTGVLSLRDPTNREVWNPGATGAPYASMLDTGNFVIAAAGGSTISWETFKNPTDTILVTQALSPGMKLRSRLLTTDYSNGRFLLNMETQRAALYTMAVPSGNLYDPYWSTPIDENVTNQVTNLVFNTTGRIYVSMKNGTQFNMTSGVIRSMEDYYHRATLDPDGVFRQYVYPKKPSSMSQAWTAVSIQPENICNAQTKVGSGTCGFNSYCMFDGSNNQTSCVCPEQYSFFDEVRKYRGCRPDFELQSCDLDEAASMAQYEFNLVNNVDWPQADYEWYTPIDMDECRRLCLIDCFCAVAVFHENTCWKKKLPLSNGIMGSGVQRTVLIKVPKSNSSQPELRKSRKWKSDKKLWILGSSLLLGGSVIANFALSSVLLFGTYCTITRKDVQPLQPSRDPGLPLKAFSYAELEKATDGFKEVLGTGASGIVYKGQLQDELGTYIAVKKIDKIQHETEKEFAVEVQTIGRTYHKNLVRMLGFCNEGTERLLVYEFMVNGSLNRFLFSGVRPLWSLRVQLALGVARGLLYLHEECSTQIIHCDIKPQNILLDDNFIAKISDFGLAKLLRTNQTQTYTGIRGTRGYVAPEWFKNVGITAKVDVYSFGVILLELICCRQNVEMEAAEEEQSILTYWANDCYRCGRVDLLVDGDDEAKLNIKKVERFVAVALWCLQEEPTMRPSILKVTQMLDGADAIPTPPDSSSVVNSFP.

A signal peptide spans 1–23 (MAPPLFLLSLQLLVLLSSPSAQA). The Bulb-type lectin domain maps to 24–150 (QNISLGTSLT…GGSTISWETF (127 aa)). At 24–458 (QNISLGTSLT…DKKLWILGSS (435 aa)) the chain is on the extracellular side. N-linked (GlcNAc...) asparagine glycosylation is found at Asn-25, Asn-58, Asn-216, Asn-227, Asn-238, and Asn-243. The region spanning 290–341 (PENICNAQTKVGSGTCGFNSYCMFDGSNNQTSCVCPEQYSFFDEVRKYRGCR) is the EGF-like; atypical domain. Cystine bridges form between Cys-294-Cys-311, Cys-305-Cys-322, Cys-324-Cys-340, Cys-386-Cys-406, and Cys-390-Cys-396. An N-linked (GlcNAc...) asparagine glycan is attached at Asn-318. In terms of domain architecture, PAN spans 349 to 426 (CDLDEAASMA…IMGSGVQRTV (78 aa)). N-linked (GlcNAc...) asparagine glycosylation is present at Asn-434. The chain crosses the membrane as a helical span at residues 459–479 (LLLGGSVIANFALSSVLLFGT). Over 480-804 (YCTITRKDVQ…DSSSVVNSFP (325 aa)) the chain is Cytoplasmic. A Protein kinase domain is found at 514-790 (DGFKEVLGTG…TQMLDGADAI (277 aa)). ATP contacts are provided by residues 520-528 (LGTGASGIV) and Lys-544. Asp-638 acts as the Proton acceptor in catalysis.

This sequence belongs to the protein kinase superfamily. Ser/Thr protein kinase family.

The protein resides in the membrane. It carries out the reaction L-seryl-[protein] + ATP = O-phospho-L-seryl-[protein] + ADP + H(+). The enzyme catalyses L-threonyl-[protein] + ATP = O-phospho-L-threonyl-[protein] + ADP + H(+). In terms of biological role, does not seem to be involved in resistance against the herbivorous insect brown planthopper (N.lugens, BPH). The sequence is that of G-type lectin S-receptor-like serine/threonine-protein kinase LECRK4 from Oryza sativa subsp. indica (Rice).